Consider the following 783-residue polypeptide: Protein SCARECROW (783 aa).

The tract at residues 298-387 is disordered; it reads QPQSQDAITH…QSPPASENTA (90 aa). Low complexity-rich tracts occupy residues 342 to 353 and 372 to 384; these read PSSLPFVPVPSS and ESQS…PASE. Residues 387 to 418 adopt a coiled-coil conformation; sequence AAAALIRTESIMRREKEELEQQKKDEEGLHLL. In terms of domain architecture, GRAS spans 408–777; sequence QKKDEEGLHL…LCLLTASAWR (370 aa). Residues 415 to 478 form a leucine repeat I (LRI) region; the sequence is LHLLTLLLQC…LVNSCLGIYA (64 aa). The LxCxE motif signature appears at 422–426; that stretch reads LQCAE. The interval 497-562 is VHIID; that stretch reads FQVFNGISPF…GGPPLVRLTG (66 aa). Positions 528 to 532 match the VHIID motif; sequence VHIID. The segment at 572-604 is leucine repeat II (LRII); it reads ATGKRLSDFAQKLGLPFEFFPVADKVGNLDPQR. The segment at 613-700 is PFYRE; the sequence is VAVHWLQHSL…QQLLSREIRN (88 aa). The SAW stretch occupies residues 703–777; that stretch reads AVGGPSRSGE…LCLLTASAWR (75 aa).

It belongs to the GRAS family.

The protein localises to the nucleus. Its function is as follows. Putative transcription factor involved in asymmetric cell division. Required for differentiation of endodermis and graviresponses. This is Protein SCARECROW (SCR) from Ipomoea nil (Japanese morning glory).